The primary structure comprises 88 residues: Large ribosomal subunit protein bL27 (88 aa).

Positions 1-21 (MAHKKGTGSTRNGRDSRAQRL) are disordered.

It belongs to the bacterial ribosomal protein bL27 family.

This is Large ribosomal subunit protein bL27 from Picosynechococcus sp. (strain ATCC 27264 / PCC 7002 / PR-6) (Agmenellum quadruplicatum).